The chain runs to 201 residues: Recombination protein RecR (201 aa).

Residues 60 to 75 form a C4-type zinc finger; the sequence is CSRCGNVDTVDPCTVC. In terms of domain architecture, Toprim spans 83–178; the sequence is SVIIVVEDVS…KITRLAHGVP (96 aa).

It belongs to the RecR family.

May play a role in DNA repair. It seems to be involved in an RecBC-independent recombinational process of DNA repair. It may act with RecF and RecO. The polypeptide is Recombination protein RecR (Rhizobium etli (strain CIAT 652)).